The following is a 252-amino-acid chain: D-aminoacyl-tRNA deacylase (252 aa).

It belongs to the DtdA deacylase family. In terms of assembly, monomer. Zn(2+) is required as a cofactor.

It catalyses the reaction a D-aminoacyl-tRNA + H2O = a tRNA + a D-alpha-amino acid + H(+). It carries out the reaction glycyl-tRNA(Ala) + H2O = tRNA(Ala) + glycine + H(+). Its function is as follows. D-aminoacyl-tRNA deacylase with broad substrate specificity. By recycling D-aminoacyl-tRNA to D-amino acids and free tRNA molecules, this enzyme counteracts the toxicity associated with the formation of D-aminoacyl-tRNA entities in vivo. The sequence is that of D-aminoacyl-tRNA deacylase from Pyrobaculum arsenaticum (strain DSM 13514 / JCM 11321 / PZ6).